Here is a 713-residue protein sequence, read N- to C-terminus: Fibroblast growth factor receptor 4 (713 aa).

An N-terminal signal peptide occupies residues 1–20 (MLPLWLVLAGLLLAVGPAAS). The disordered stretch occupies residues 21-54 (HRGEMEPDSLASGDDDEDSDGDGPHGDRSEEPVY). Residues 21-281 (HRGEMEPDSL…AETSEAKYTD (261 aa)) are Extracellular-facing. A compositionally biased stretch (basic and acidic residues) spans 42–54 (DGPHGDRSEEPVY). Ig-like C2-type domains lie at 59–152 (PYWT…YLLD) and 161–261 (PILQ…AWLT). Cysteines 84 and 136 form a disulfide. 5 N-linked (GlcNAc...) asparagine glycosylation sites follow: asparagine 133, asparagine 170, asparagine 202, asparagine 223, and asparagine 234. The cysteines at positions 183 and 245 are disulfide-linked. The helical transmembrane segment at 282–302 (IIIYTSGSLAVAMALIIVVLC) threads the bilayer. Topologically, residues 303–713 (RMQTQSSKQP…CLFSCPSGRT (411 aa)) are cytoplasmic. One can recognise a Protein kinase domain in the interval 379–667 (LVLGKPLGEG…ILAAISEEYL (289 aa)). ATP is bound by residues 385 to 393 (LGEGCFGQV) and lysine 415. The active-site Proton acceptor is the aspartate 524. 3 positions are modified to phosphotyrosine; by autocatalysis: tyrosine 554, tyrosine 555, and tyrosine 666.

Belongs to the protein kinase superfamily. Tyr protein kinase family. Fibroblast growth factor receptor subfamily. Monomer. Homodimer after ligand binding. Interacts with FGF1, FGF2, FGF4, FGF6, FGF8, FGF9, FGF16, FGF17, FGF18, FGF19, FGF21 and FGF23 (in vitro). Binding affinity for FGF family members is enhanced by interactions between FGFs and heparan sulfate proteoglycans. Interacts with KLB; this strongly increases the affinity for FGF19 and FGF23. Affinity for FGF19 is strongly increased by KLB and sulfated glycosaminoglycans. KLB and KL both interact with the core-glycosylated FGFR4 in the endoplasmic reticulum and promote its degradation, so that only FGFR4 with fully mature N-glycans is expressed at the cell surface. Identified in a complex with NCAM1, CDH2, PLCG1, FRS2, SRC, SHC1, GAP43 and CTTN. Interacts with MMP14 and HIP1. Interacts with STAT3. Post-translationally, N-glycosylated. Full maturation of the glycan chains in the Golgi is essential for high affinity interaction with FGF19. In terms of processing, ubiquitinated. Subject to proteasomal degradation when not fully glycosylated. Autophosphorylated. Binding of FGF family members together with heparan sulfate proteoglycan or heparin promotes receptor dimerization and autophosphorylation on tyrosine residues. Autophosphorylation occurs in trans between the two FGFR molecules present in the dimer.

Its subcellular location is the cell membrane. The protein resides in the endosome. The protein localises to the endoplasmic reticulum. It catalyses the reaction L-tyrosyl-[protein] + ATP = O-phospho-L-tyrosyl-[protein] + ADP + H(+). Present in an inactive conformation in the absence of bound ligand. Ligand binding leads to dimerization and activation by autophosphorylation on tyrosine residues. In terms of biological role, tyrosine-protein kinase that acts as a cell-surface receptor for fibroblast growth factors and plays a role in the regulation of cell proliferation, differentiation and migration, and in regulation of lipid metabolism, bile acid biosynthesis, glucose uptake, vitamin D metabolism and phosphate homeostasis. Required for normal down-regulation of the expression of CYP7A1, the rate-limiting enzyme in bile acid synthesis, in response to FGF19. Phosphorylates PLCG1 and FRS2. Ligand binding leads to the activation of several signaling cascades. Activation of PLCG1 leads to the production of the cellular signaling molecules diacylglycerol and inositol 1,4,5-trisphosphate. Phosphorylation of FRS2 triggers recruitment of GRB2, GAB1, PIK3R1 and SOS1, and mediates activation of RAS, MAPK1/ERK2, MAPK3/ERK1 and the MAP kinase signaling pathway, as well as of the AKT1 signaling pathway. Promotes SRC-dependent phosphorylation of the matrix protease MMP14 and its lysosomal degradation. FGFR4 signaling is down-regulated by receptor internalization and degradation; MMP14 promotes internalization and degradation of FGFR4. The chain is Fibroblast growth factor receptor 4 (FGFR4) from Coturnix coturnix (Common quail).